A 542-amino-acid polypeptide reads, in one-letter code: Phenylacetone monooxygenase (542 aa).

FAD is bound by residues serine 27, glutamate 46, 54–57 (VWYW), aspartate 66, tyrosine 72, valine 119, and glutamine 152. 64–66 (RCD) provides a ligand contact to NADP(+). Residues 194–200 (TGSSGIQ), 217–218 (RT), and 336–337 (KR) each bind NADP(+). Methionine 446 serves as a coordination point for FAD. Position 501 (tryptophan 501) interacts with NADP(+).

Belongs to the FAD-binding monooxygenase family. Monomer. The cofactor is FAD.

It catalyses the reaction phenylacetone + NADPH + O2 + H(+) = benzyl acetate + NADP(+) + H2O. Its function is as follows. Catalyzes a Baeyer-Villiger oxidation reaction, i.e. the insertion of an oxygen atom into a carbon-carbon bond adjacent to a carbonyl, which converts ketones to esters. Is most efficient with phenylacetone as substrate, leading to the formation of benzyl acetate. Can also oxidize other aromatic ketones (benzylacetone, alpha-methylphenylacetone and 4-hydroxyacetophenone), some aliphatic ketones (dodecan-2-one and bicyclohept-2-en-6-one) and sulfides (e.g. methyl 4-tolylsulfide). This is Phenylacetone monooxygenase (pamO) from Thermobifida fusca (strain YX).